A 588-amino-acid polypeptide reads, in one-letter code: MRQHSRMAVAALAAGANAASFTDVCTVSNVKAALPANGTLLGISMLPSAVTANPLYNQSAGMGSTTTYDYCNVTVAYTHTGKGDKVVIKYAFPKPSDYENRFYVAGGGGFSLSSDATGGLAYGAVGGATDAGYDAFDNSYDEVVLYGNGTINWDATYMFAYQALGEMTRIGKYITKGFYGQSSDSKVYTYYEGCSDGGREGMSQVQRWGEEYDGAITGAPAFRFAQQQVHHVFSSEVEQTLDYYPPPCELKKIVNATIAACDPLDGRTDGVVSRTDLCKLNFNLTSIIGEPYYCAAGTSTSLGFGFSNGKRSNVKRQAEGSTTSYQPAQNGTVTARGVAVAQAIYDGLHNSKGERAYLSWQIASELSDAETEYNSDTGKWELNIPSTGGEYVTKFIQLLNLDNLSDLNNVTYDTLVDWMNTGMVRYMDSLQTTLPDLTPFQSSGGKLLHYHGESDPSIPAASSVHYWQAVRSVMYGDKTEEEALEALEDWYQFYLIPGAAHCGTNSLQPGPYPENNMEIMIDWVENGNKPSRLNATVSSGTYAGETQMLCQWPKRPLWRGNSSFDCVNDEKSIDSWTYEFPAFKVPVY.

A signal peptide spans 1–18 (MRQHSRMAVAALAAGANA). 3 disulfides stabilise this stretch: Cys-25/Cys-71, Cys-194/Cys-502, and Cys-261/Cys-278. The active-site Acyl-ester intermediate is Ser-195. Asp-262, Asp-265, Asp-269, and Val-271 together coordinate Ca(2+). Gln-317 is modified (pyrrolidone carboxylic acid). Active-site charge relay system residues include Asp-455 and His-501.

This sequence belongs to the tannase family. Heterooctamer of 4 33 kDa and 4 30 kDa subunits linked by disulfide bond(s). In terms of processing, the protein is glycosylated to a carbohydrate content of 22.7%. Post-translationally, the N-terminus of the 30 kDa subunit is blocked.

The enzyme catalyses digallate + H2O = 2 3,4,5-trihydroxybenzoate + H(+). In terms of biological role, hydrolyzes ester bonds of tannic acid to produce gallic acid and glucose. This Aspergillus oryzae (strain ATCC 42149 / RIB 40) (Yellow koji mold) protein is Tannase.